Reading from the N-terminus, the 231-residue chain is U1 small nuclear ribonucleoprotein C-1 (231 aa).

Residues 4-36 form a Matrin-type zinc finger; sequence YYCDYCDTYLTHDSPSVRKQHNAGYKHKANVRT. Composition is skewed to pro residues over residues 117 to 127, 134 to 159, and 167 to 178; these read APGIPGYPGGP, GAPP…PPGS, and LPRPPTLPPPTS. Residues 117 to 231 are disordered; sequence APGIPGYPGG…SYAQPSEGNH (115 aa). Residues 181–193 show a composition bias toward low complexity; it reads PGAPIPNSAAPPA. The span at 199 to 217 shows a compositional bias: pro residues; it reads PPAPAGPTSGAPPAPPTAP.

This sequence belongs to the U1 small nuclear ribonucleoprotein C family. In terms of assembly, U1 snRNP is composed of the 7 core Sm proteins B/B', D1, D2, D3, E, F and G that assemble in a heptameric protein ring on the Sm site of the small nuclear RNA to form the core snRNP, and at least 3 U1 snRNP-specific proteins U1-70K, U1-A and U1-C. U1-C interacts with U1 snRNA and the 5' splice-site region of the pre-mRNA.

The protein resides in the nucleus. Functionally, component of the spliceosomal U1 snRNP, which is essential for recognition of the pre-mRNA 5' splice-site and the subsequent assembly of the spliceosome. U1-C is directly involved in initial 5' splice-site recognition for both constitutive and regulated alternative splicing. The interaction with the 5' splice-site seems to precede base-pairing between the pre-mRNA and the U1 snRNA. Stimulates commitment or early (E) complex formation by stabilizing the base pairing of the 5' end of the U1 snRNA and the 5' splice-site region. This Sorghum bicolor (Sorghum) protein is U1 small nuclear ribonucleoprotein C-1.